An 851-amino-acid polypeptide reads, in one-letter code: ATP-dependent DNA helicase DDX31 (851 aa).

A disordered region spans residues Met-1–Arg-196. The Q motif signature appears at Ala-230–Lys-259. The Helicase ATP-binding domain maps to Ile-262–Ile-443. Ser-275–Thr-282 contacts ATP. A DEAD box motif is present at residues Asp-388 to Asp-391. A Helicase C-terminal domain is found at Ser-480–Leu-659. Disordered regions lie at residues Lys-762 to Ala-784 and Lys-804 to Val-851. Arg-828 carries the post-translational modification Omega-N-methylarginine. The segment covering Val-841 to Val-851 has biased composition (basic and acidic residues).

Belongs to the DEAD box helicase family. DDX31/DBP7 subfamily. In terms of assembly, interacts with NPM1; this interaction prevents interaction between NPM1 and HDM2. In terms of tissue distribution, weakly or undetectably expressed in normal organs. Up-regulated in renal cell carcinoma.

It localises to the nucleus. The protein resides in the nucleolus. It carries out the reaction ATP + H2O = ADP + phosphate + H(+). Its function is as follows. May have DNA helicase activity and RNA helicase activity. Probably have ssDNA and RNA dependent ATPase activity. Plays a role in ribosome biogenesis and TP53/p53 regulation through its interaction with NPM1. This is ATP-dependent DNA helicase DDX31 from Homo sapiens (Human).